The chain runs to 89 residues: Small ribosomal subunit protein uS14 (89 aa).

This sequence belongs to the universal ribosomal protein uS14 family. In terms of assembly, part of the 30S ribosomal subunit. Contacts proteins S3 and S10.

Its function is as follows. Binds 16S rRNA, required for the assembly of 30S particles and may also be responsible for determining the conformation of the 16S rRNA at the A site. The polypeptide is Small ribosomal subunit protein uS14 (Deinococcus radiodurans (strain ATCC 13939 / DSM 20539 / JCM 16871 / CCUG 27074 / LMG 4051 / NBRC 15346 / NCIMB 9279 / VKM B-1422 / R1)).